The following is a 206-amino-acid chain: Large ribosomal subunit protein uL4 (206 aa).

This sequence belongs to the universal ribosomal protein uL4 family. In terms of assembly, part of the 50S ribosomal subunit.

Its function is as follows. One of the primary rRNA binding proteins, this protein initially binds near the 5'-end of the 23S rRNA. It is important during the early stages of 50S assembly. It makes multiple contacts with different domains of the 23S rRNA in the assembled 50S subunit and ribosome. In terms of biological role, forms part of the polypeptide exit tunnel. In Paracoccus denitrificans (strain Pd 1222), this protein is Large ribosomal subunit protein uL4.